We begin with the raw amino-acid sequence, 234 residues long: 1-(5-phosphoribosyl)-5-[(5-phosphoribosylamino)methylideneamino] imidazole-4-carboxamide isomerase (234 aa).

Asp9 serves as the catalytic Proton acceptor. Catalysis depends on Asp131, which acts as the Proton donor.

This sequence belongs to the HisA/HisF family.

It is found in the cytoplasm. It carries out the reaction 1-(5-phospho-beta-D-ribosyl)-5-[(5-phospho-beta-D-ribosylamino)methylideneamino]imidazole-4-carboxamide = 5-[(5-phospho-1-deoxy-D-ribulos-1-ylimino)methylamino]-1-(5-phospho-beta-D-ribosyl)imidazole-4-carboxamide. The protein operates within amino-acid biosynthesis; L-histidine biosynthesis; L-histidine from 5-phospho-alpha-D-ribose 1-diphosphate: step 4/9. This chain is 1-(5-phosphoribosyl)-5-[(5-phosphoribosylamino)methylideneamino] imidazole-4-carboxamide isomerase, found in Staphylococcus aureus (strain MRSA252).